The sequence spans 562 residues: Lamassu protein LmuB (562 aa).

Component of antiviral defense system Lamassu type I, composed of LmuA and LmuB. Expression of Lamassu type I in B.subtilis (strain BEST7003) confers resistance to phages phi3T, SpBeta and SPR. May be an ATPase. The protein is Lamassu protein LmuB of Bacillus sp. (strain NCIM 5461 / CCTCC AB 2011126 / NIO-1130).